A 272-amino-acid chain; its full sequence is Ribosomal RNA small subunit methyltransferase A (272 aa).

N15, I17, G42, E64, D90, and N109 together coordinate S-adenosyl-L-methionine.

The protein belongs to the class I-like SAM-binding methyltransferase superfamily. rRNA adenine N(6)-methyltransferase family. RsmA subfamily.

The protein localises to the cytoplasm. The enzyme catalyses adenosine(1518)/adenosine(1519) in 16S rRNA + 4 S-adenosyl-L-methionine = N(6)-dimethyladenosine(1518)/N(6)-dimethyladenosine(1519) in 16S rRNA + 4 S-adenosyl-L-homocysteine + 4 H(+). Functionally, specifically dimethylates two adjacent adenosines (A1518 and A1519) in the loop of a conserved hairpin near the 3'-end of 16S rRNA in the 30S particle. May play a critical role in biogenesis of 30S subunits. In Wolbachia sp. subsp. Drosophila simulans (strain wRi), this protein is Ribosomal RNA small subunit methyltransferase A.